A 198-amino-acid polypeptide reads, in one-letter code: Ribosome maturation factor RimP (198 aa).

This sequence belongs to the RimP family.

The protein localises to the cytoplasm. Required for maturation of 30S ribosomal subunits. In Agrobacterium fabrum (strain C58 / ATCC 33970) (Agrobacterium tumefaciens (strain C58)), this protein is Ribosome maturation factor RimP.